A 574-amino-acid chain; its full sequence is MSNPPHGGVLKDLLARDAPRHDQLETEAEQLPAIVLTERQLCDLELIMNGGFSPLEGFMNQKDYDNVCENVRLADGNLFSMPITLDVSKAVIDESQLKAGSRVTLRDFRDDRNLAILTIDDIYRPDKAREAKLVFGGDKEHPAIKFLNNTVQEFYIGGKVEAINKLNHYDYVALRYTPAELRVHFDKLGWSRVVAFQTRNPMHRAHRELTVRAARARQANVLIHPVVGLTKPGDIDHFTRVRAYQALLPRYPNGMAVLGLLGLAMRMGGPREAIWHAIIRKNHGATHFIVGRDHAGPGKNSKGEEFYGPYDAQHAVEKYREELGIEVVEFQQVTYLPDTDEYKPKDEVPAGVKTLDISGTELRNRLRTGAPIPEWFSYPEVVKILRESSRPRSTQGFTIFLTGYMNSGKDAIARALQVTLNQQGGRSVSLLLGDTVRHELSSELGFSREDRHTNVQRIAFVAGELTRAGAAVIAAPIAPYEESRNAARDAVTQGGGNFFLVHVATPLEYCEKTDKRGIYAKARRGEIKGFTGVDDPYETPSNAHLTVDVSKQTVRSIVHEIILMLETEGFFDRA.

Residues 1 to 169 form an N-terminal region; that stretch reads MSNPPHGGVL…VEAINKLNHY (169 aa). The interval 170–394 is catalytic; the sequence is DYVALRYTPA…LRESSRPRST (225 aa). Q197 contacts sulfate. Residues 197 to 200 and 291 to 294 contribute to the ATP site; these read QTRN and GRDH. Catalysis depends on residues T198, R199, and N200. Position 199 (R199) interacts with sulfate. A295 serves as a coordination point for sulfate. An ATP-binding site is contributed by V333. The interval 395-574 is allosteric regulation domain; adenylyl-sulfate kinase-like; it reads QGFTIFLTGY…LETEGFFDRA (180 aa). 3'-phosphoadenylyl sulfate-binding positions include 434–437, R451, 477–478, and R516; these read DTVR and IA.

This sequence in the N-terminal section; belongs to the sulfate adenylyltransferase family. In the C-terminal section; belongs to the APS kinase family. In terms of assembly, homohexamer. Dimer of trimers.

The protein resides in the cytoplasm. It catalyses the reaction sulfate + ATP + H(+) = adenosine 5'-phosphosulfate + diphosphate. The protein operates within sulfur metabolism; hydrogen sulfide biosynthesis; sulfite from sulfate: step 1/3. Allosterically inhibited by 3'-phosphoadenosine 5'-phosphosulfate (PAPS). Its function is as follows. Catalyzes the first intracellular reaction of sulfate assimilation, forming adenosine-5'-phosphosulfate (APS) from inorganic sulfate and ATP. Plays an important role in sulfate activation as a component of the biosynthesis pathway of sulfur-containing amino acids. The protein is Sulfate adenylyltransferase of Aspergillus clavatus (strain ATCC 1007 / CBS 513.65 / DSM 816 / NCTC 3887 / NRRL 1 / QM 1276 / 107).